Here is a 66-residue protein sequence, read N- to C-terminus: Large ribosomal subunit protein uL29 (66 aa).

This sequence belongs to the universal ribosomal protein uL29 family.

The protein is Large ribosomal subunit protein uL29 of Bacillus mycoides (strain KBAB4) (Bacillus weihenstephanensis).